The chain runs to 291 residues: 4-hydroxy-tetrahydrodipicolinate synthase (291 aa).

A pyruvate-binding site is contributed by Thr-47. Tyr-134 acts as the Proton donor/acceptor in catalysis. Lys-162 serves as the catalytic Schiff-base intermediate with substrate. Ile-205 contacts pyruvate.

The protein belongs to the DapA family. Homotetramer; dimer of dimers.

The protein localises to the cytoplasm. It catalyses the reaction L-aspartate 4-semialdehyde + pyruvate = (2S,4S)-4-hydroxy-2,3,4,5-tetrahydrodipicolinate + H2O + H(+). Its pathway is amino-acid biosynthesis; L-lysine biosynthesis via DAP pathway; (S)-tetrahydrodipicolinate from L-aspartate: step 3/4. Functionally, catalyzes the condensation of (S)-aspartate-beta-semialdehyde [(S)-ASA] and pyruvate to 4-hydroxy-tetrahydrodipicolinate (HTPA). The chain is 4-hydroxy-tetrahydrodipicolinate synthase from Methanoculleus marisnigri (strain ATCC 35101 / DSM 1498 / JR1).